The chain runs to 451 residues: uncharacterized protein (451 aa).

The 59-residue stretch at 1–59 folds into the TRAM domain; the sequence is MLHKNDIIETEISDISHEGMGIAKVDGFVFFVENALPGEIIKMRVLKLRKRIGYGKVEE. 4 residues coordinate S-adenosyl-L-methionine: Gln283, Tyr312, Glu333, and Asp381. The Nucleophile role is filled by Cys408.

This sequence belongs to the class I-like SAM-binding methyltransferase superfamily. RNA M5U methyltransferase family.

This is an uncharacterized protein from Streptococcus agalactiae serotype V (strain ATCC BAA-611 / 2603 V/R).